The following is a 356-amino-acid chain: Guanine nucleotide-binding protein alpha-17 subunit (356 aa).

A lipid anchor (N-myristoyl glycine) is attached at glycine 2. Cysteine 4 carries the S-palmitoyl cysteine lipid modification. The 325-residue stretch at 32-356 (SIVKLLLLGA…QKNLQKAGMM (325 aa)) folds into the G-alpha domain. The tract at residues 35 to 48 (KLLLLGAGECGKST) is G1 motif. GTP-binding positions include 40 to 47 (GAGECGKS), 177 to 183 (LYSRVAT), 202 to 206 (DVGGQ), 271 to 274 (NKKD), and alanine 328. Mg(2+)-binding residues include serine 47 and threonine 183. A G2 motif region spans residues 175–183 (DILYSRVAT). The G3 motif stretch occupies residues 198-207 (FRVFDVGGQR). The interval 267 to 274 (ILFMNKKD) is G4 motif. The tract at residues 326-331 (TCATDT) is G5 motif.

The protein belongs to the G-alpha family. In terms of assembly, g proteins are composed of 3 units; alpha, beta and gamma. The alpha chain contains the guanine nucleotide binding site. In terms of tissue distribution, expressed in sensory neurons in the head and tail. Expressed in amphid AWC neurons, to a lesser extent in AWB and weakly in AWA, ASH and ADF neurons (head sensory neurons). Expressed in phasmid PHA and PHB neurons (tail sensory neurons).

The protein localises to the cell projection. The protein resides in the cilium. It is found in the dendrite. Guanine nucleotide-binding proteins (G proteins) are involved as modulators or transducers in various transmembrane signaling systems. This specific G-alpha subunit plays an important role in olfaction and in cilia morphogenesis. Involved in chemotactic responses to attractants diacetyl, pyrazine, 2,4,5-trimethylthiazole, benzaldehyde, isoamyl alcohol, butanone and 2,3-pentanedione. Displays a redundant function with gpa-3 in chemotactic responses. Plays a role in the avoidance response to the noxious chemical quinine in ASH sensory neurons. Involved in avoidance responses to copper, sodium dodecyl sulfate and linoleic acid. Involved in osmotic avoidance and mechanosensory responses. Involved in specifying fan-like morphology of cilia of head sensory neurons AWC. Plays a role in the detection of preferred food sources by mediating the recognition of food odors in olfactory sensory neurons. The polypeptide is Guanine nucleotide-binding protein alpha-17 subunit (Caenorhabditis elegans).